We begin with the raw amino-acid sequence, 632 residues long: Pheromone-processing carboxypeptidase kex1 (632 aa).

Residues 1 to 38 (MLLTAPSSRGSRTQSGIANVSWWALSLLLLFSPTLVSA) form the signal peptide. The Lumenal segment spans residues 39–523 (KSAADYYVRS…KETEWKAYAK (485 aa)). N-linked (GlcNAc...) asparagine glycans are attached at residues Asn119 and Asn126. Residues Ser190 and Asp390 contribute to the active site. N-linked (GlcNAc...) asparagine glycans are attached at residues Asn441 and Asn449. Residue His452 is part of the active site. The interval 480–507 (KPADSRIDGEKLPQTSVGGHPNSTAAEQ) is disordered. The segment covering 492–506 (PQTSVGGHPNSTAAE) has biased composition (polar residues). N-linked (GlcNAc...) asparagine glycosylation is present at Asn501. Residues 524–544 (SGEAALIVVIIGVTVWGFFIW) form a helical membrane-spanning segment. The Cytoplasmic segment spans residues 545 to 632 (RSRRRNRGYQ…SSTKPGGAQP (88 aa)). The segment at 568–632 (ERFHNKRSGP…SSTKPGGAQP (65 aa)) is disordered. Over residues 581–590 (EAGDFDESEL) the composition is skewed to acidic residues.

It belongs to the peptidase S10 family.

The protein localises to the golgi apparatus. Its subcellular location is the trans-Golgi network membrane. The catalysed reaction is Preferential release of a C-terminal arginine or lysine residue.. Functionally, protease with a carboxypeptidase B-like function involved in the C-terminal processing of the lysine and arginine residues from protein precursors. Promotes cell fusion and is involved in the programmed cell death. The polypeptide is Pheromone-processing carboxypeptidase kex1 (kex1) (Neosartorya fischeri (strain ATCC 1020 / DSM 3700 / CBS 544.65 / FGSC A1164 / JCM 1740 / NRRL 181 / WB 181) (Aspergillus fischerianus)).